The sequence spans 198 residues: Phosphoheptose isomerase (198 aa).

The 163-residue stretch at 36–198 folds into the SIS domain; it reads MARALGADRK…DRTLFGGPGG (163 aa). Residue 51–53 participates in substrate binding; that stretch reads NGG. 2 residues coordinate Zn(2+): His60 and Glu64. Substrate is bound by residues Glu64, 93 to 94, 119 to 121, Ser124, and Gln174; these read ND and STS. Zn(2+) is bound by residues Gln174 and His182.

The protein belongs to the SIS family. GmhA subfamily. As to quaternary structure, homotetramer. The cofactor is Zn(2+).

The protein resides in the cytoplasm. The enzyme catalyses 2 D-sedoheptulose 7-phosphate = D-glycero-alpha-D-manno-heptose 7-phosphate + D-glycero-beta-D-manno-heptose 7-phosphate. It participates in carbohydrate biosynthesis; D-glycero-D-manno-heptose 7-phosphate biosynthesis; D-glycero-alpha-D-manno-heptose 7-phosphate and D-glycero-beta-D-manno-heptose 7-phosphate from sedoheptulose 7-phosphate: step 1/1. Functionally, catalyzes the isomerization of sedoheptulose 7-phosphate in D-glycero-D-manno-heptose 7-phosphate. The protein is Phosphoheptose isomerase of Halorhodospira halophila (strain DSM 244 / SL1) (Ectothiorhodospira halophila (strain DSM 244 / SL1)).